The chain runs to 672 residues: GPI mannosyltransferase pigv-1 (672 aa).

Over 1–134 (MRRREPGRDV…TQRCLGFCFR (134 aa)) the chain is Cytoplasmic. Residues 82–94 (REESDSSSSREDS) show a composition bias toward basic and acidic residues. The tract at residues 82 to 115 (REESDSSSSREDSPLGSTETGESCSTTDDEESKE) is disordered. The segment covering 97-107 (GSTETGESCST) has biased composition (low complexity). The helical transmembrane segment at 135–155 (QLFFSRMWVFILQFIASYYAG) threads the bilayer. Residues 156–239 (DRFRTDGFNL…NGMESVFGWT (84 aa)) lie on the Extracellular side of the membrane. A helical membrane pass occupies residues 240-260 (FPPWVTITLAAVFVNLFCFLL). Residues 261–277 (CGMTLYQVVLIMTRSVK) lie on the Cytoplasmic side of the membrane. The next 2 helical transmembrane spans lie at 278 to 298 (ISLL…FSSA) and 299 to 319 (YSES…LFGL). Residues 320 to 345 (RGKGFWHRMLKGFTGTICFGLTFAVR) lie on the Extracellular side of the membrane. A helical transmembrane segment spans residues 346–366 (SNGLLNFLYVAWIWCGTLLWD). Residues 367–423 (EEMPIPDCHKLISTLAATKNERYKQEWQAKFWRFQQKRKQNRKVFRWTDPNFSRCVT) lie on the Cytoplasmic side of the membrane. Residues 424 to 444 (LFIVIVCAISATLLFFTPYVF) form a helical membrane-spanning segment. The Extracellular segment spans residues 445–520 (MTNFTADEFC…WSVKFFGYWK (76 aa)). The chain crosses the membrane as a helical span at residues 521 to 541 (IKKIPCFLMMLPAAILTVLAI). At 542–569 (KSSWNDVFLNKRWNNIWVLTARSDHSLP) the chain is on the cytoplasmic side. The chain crosses the membrane as a helical span at residues 570-590 (MAIHSSVLLFVAIFYINSEVF). The Extracellular segment spans residues 591 to 592 (TR). Residues 593–613 (IIFSSSPFIYIYIATYIDKLT) traverse the membrane as a helical segment. At 614 to 648 (QGTIAGNRLWQYFESPGILPFFVFRRVWQDGWRGK) the chain is on the cytoplasmic side. The chain crosses the membrane as a helical span at residues 649–669 (LLYIYILGYFVFGTMAHSAWL). Over 670 to 672 (PFT) the chain is Extracellular.

This sequence belongs to the PIGV family. As to expression, expressed in epithelial tissues including the epidermis, pharynx, intestine, rectum and excretory cell during embryogenesis.

It localises to the endoplasmic reticulum membrane. It participates in glycolipid biosynthesis; glycosylphosphatidylinositol-anchor biosynthesis. Functionally, alpha-1,6-mannosyltransferase involved in glycosylphosphatidylinositol-anchor biosynthesis. Transfers the second mannose to the glycosylphosphatidylinositol during GPI precursor assembly. Required for maintenance of epithelial integrity during embryogenesis. The chain is GPI mannosyltransferase pigv-1 from Caenorhabditis elegans.